We begin with the raw amino-acid sequence, 938 residues long: ATP-dependent RNA helicase DDX42 (938 aa).

Residues 1-18 show a composition bias toward gly residues; the sequence is MNWNKGGPGTKRGFGFGG. The segment at 1 to 114 is disordered; sequence MNWNKGGPGT…KPVDSDSDDD (114 aa). K5 carries the post-translational modification N6-acetyllysine. R12 bears the Omega-N-methylarginine mark. The span at 35-52 shows a compositional bias: low complexity; sequence SHSAFGATSSSSGFGKSA. Phosphoserine is present on S58. The segment covering 70–84 has biased composition (acidic residues); it reads DEENAYFEDEEEDSS. Residues S96, S104, S109, and S111 each carry the phosphoserine modification. The stretch at 116 to 157 forms a coiled coil; that stretch reads LEAFMAEVEDQAARDMKRLEEKDKERKNVKGIRDDIEEEDDQ. Residues 182-203 are disordered; sequence EYDSDGNPIAPTKKIIDPLPPI. S185 is modified (phosphoserine). Positions 253–281 match the Q motif motif; sequence SSFAHFGFDEQLMHQIRKSEYTQPTPIQC. The region spanning 284–459 is the Helicase ATP-binding domain; that stretch reads VPVALSGRDM…RDILIDPIRV (176 aa). 297-304 is a binding site for ATP; that stretch reads AKTGSGKT. The DEAD box motif lies at 407-410; it reads DEAD. In terms of domain architecture, Helicase C-terminal spans 487–632; the sequence is WLTRRLVEFT…HVSKELLDLA (146 aa). Composition is skewed to polar residues over residues 737-757 and 786-798; these read LNSV…SPVT and GVNN…NSRE. The segment at 737 to 938 is disordered; the sequence is LNSVPTNSAQ…PKRKKSRWDS (202 aa). Residues 738 to 833 form a necessary for interaction with TP53BP2 region; the sequence is NSVPTNSAQQ…TGNRHSDSPR (96 aa). S754 is modified (phosphoserine). Residues 820 to 920 show a composition bias toward basic and acidic residues; it reads SHGETGNRHS…KVDSKTDKTA (101 aa). K899 is covalently cross-linked (Glycyl lysine isopeptide (Lys-Gly) (interchain with G-Cter in SUMO2)).

It belongs to the DEAD box helicase family. DDX42 subfamily. Transient component of the SF3B subcomplex of the 17S U2 SnRNP complex. Interacts (via the C-terminus) with TP53BP2; the interaction is not inhibitied by TP53BP2 ubiquitination and is independent of p53/TP53. In terms of tissue distribution, expressed in several cell lines (at protein level). Expressed in liver, lung, tonsil, thymus, muscle and pancreatic islets.

It is found in the cytoplasm. Its subcellular location is the nucleus. The protein resides in the cajal body. The protein localises to the nucleus speckle. The catalysed reaction is ATP + H2O = ADP + phosphate + H(+). Functionally, ATP-dependent RNA helicase that binds to partially double-stranded RNAs (dsRNAs) in order to unwind RNA secondary structures. Unwinding is promoted in the presence of single-strand binding proteins. Also mediates RNA duplex formation thereby displacing the single-strand RNA binding protein. ATP and ADP modulate its activity: ATP binding and hydrolysis by DDX42 triggers RNA strand separation, whereas the ADP-bound form of the protein triggers annealing of complementary RNA strands. Required for assembly of the 17S U2 SnRNP complex of the spliceosome, a large ribonucleoprotein complex that removes introns from transcribed pre-mRNAs: DDX42 associates transiently with the SF3B subcomplex of the 17S U2 SnRNP complex and is released after fulfilling its role in the assembly of 17S U2 SnRNP. Involved in the survival of cells by interacting with TP53BP2 and thereby counteracting the apoptosis-stimulating activity of TP53BP2. Relocalizes TP53BP2 to the cytoplasm. In Homo sapiens (Human), this protein is ATP-dependent RNA helicase DDX42.